Consider the following 149-residue polypeptide: 5-hydroxytryptamine receptor 1E (149 aa).

The Extracellular segment spans residues 1–6; that stretch reads HQPANY. A helical membrane pass occupies residues 7 to 31; that stretch reads LICSLAVTDLLVAVLVMPLSIMYIV. At 32-39 the chain is on the cytoplasmic side; it reads MDSWRLGY. Residues 40 to 65 form a helical membrane-spanning segment; that stretch reads FICEVWLSVDMTCCTCSILHLCVIAL. A disulfide bond links cysteine 42 and cysteine 120. Residues aspartate 49 and cysteine 53 each coordinate serotonin. The short motif at 66–68 is the DRY motif; important for ligand-induced conformation changes element; it reads DRY. Residues 66-85 are Extracellular-facing; the sequence is DRYWAITNAIEYARKRTAKR. A helical membrane pass occupies residues 86-104; that stretch reads AGLMILTVWTISIFISMPP. The Cytoplasmic segment spans residues 105 to 149; it reads LFWRSHRQLSPPPSQCAIQHDHVIYTIYSTLGAFYIPLTLILILY.

The protein belongs to the G-protein coupled receptor 1 family.

It localises to the cell membrane. G-protein coupled receptor for 5-hydroxytryptamine (serotonin). Also functions as a receptor for various alkaloids and psychoactive substances. Ligand binding causes a conformation change that triggers signaling via guanine nucleotide-binding proteins (G proteins) and modulates the activity of downstream effectors, such as adenylate cyclase. HTR1E is coupled to G(i)/G(o) G alpha proteins and mediates inhibitory neurotransmission by inhibiting adenylate cyclase activity. This is 5-hydroxytryptamine receptor 1E (HTR1E) from Sus scrofa (Pig).